A 29-amino-acid chain; its full sequence is Photosystem I reaction center subunit XII (29 aa).

A helical membrane pass occupies residues 7-26; sequence IFVALILALFSFVLAIRLGT.

This sequence belongs to the PsaM family.

The protein resides in the plastid. It localises to the chloroplast thylakoid membrane. This is Photosystem I reaction center subunit XII from Guillardia theta (Cryptophyte).